The sequence spans 141 residues: uncharacterized protein (141 aa).

This is an uncharacterized protein from Sinorhizobium fredii (strain NBRC 101917 / NGR234).